Reading from the N-terminus, the 383-residue chain is Acetylornithine deacetylase (383 aa).

H80 serves as a coordination point for Zn(2+). The active site involves D82. Zn(2+) is bound at residue D112. E144 is a catalytic residue. Residues E145, E169, and H355 each coordinate Zn(2+).

The protein belongs to the peptidase M20A family. ArgE subfamily. In terms of assembly, homodimer. Zn(2+) is required as a cofactor. It depends on Co(2+) as a cofactor. Requires glutathione as cofactor.

It is found in the cytoplasm. The catalysed reaction is N(2)-acetyl-L-ornithine + H2O = L-ornithine + acetate. Its pathway is amino-acid biosynthesis; L-arginine biosynthesis; L-ornithine from N(2)-acetyl-L-ornithine (linear): step 1/1. Catalyzes the hydrolysis of the amide bond of N(2)-acetylated L-amino acids. Cleaves the acetyl group from N-acetyl-L-ornithine to form L-ornithine, an intermediate in L-arginine biosynthesis pathway, and a branchpoint in the synthesis of polyamines. The protein is Acetylornithine deacetylase of Salmonella typhimurium (strain LT2 / SGSC1412 / ATCC 700720).